Reading from the N-terminus, the 359-residue chain is Tyrosine-protein phosphatase non-receptor type 7 (359 aa).

The tract at residues 1–33 (MVQACEGRSRAQLPTLSLGADMTQPPPTKAPAK) is disordered. Positions 38–51 (LQERRGSSVALMLD) are interaction with MAP kinases. S44 carries the post-translational modification Phosphoserine. T66 is modified (phosphothreonine). 2 positions are modified to phosphoserine: S93 and S143. In terms of domain architecture, Tyrosine-protein phosphatase spans 97–349 (LEEEFLKIPS…QFLHHTLALY (253 aa)). Substrate is bound by residues D257, 290–296 (CSAGIGR), and Q334. C290 functions as the Phosphocysteine intermediate in the catalytic mechanism. C290 is modified (cysteine sulfenic acid (-SOH)).

The protein belongs to the protein-tyrosine phosphatase family. Non-receptor class subfamily. In terms of processing, oxidized at active site cysteine. Treatment with pervanadate (vanadate and H(2)O(2)) or with antigen enhanced oxidation of active site cysteine. In terms of tissue distribution, expressed in bone marrow-derived mast cells.

The protein localises to the cytoplasm. It localises to the cytoskeleton. The enzyme catalyses O-phospho-L-tyrosyl-[protein] + H2O = L-tyrosyl-[protein] + phosphate. Inhibited upon FCER1A triggering. Its function is as follows. May play a role in the regulation of T and B-lymphocyte development and signal transduction. This is Tyrosine-protein phosphatase non-receptor type 7 (Ptpn7) from Mus musculus (Mouse).